Here is a 376-residue protein sequence, read N- to C-terminus: Acetate kinase (376 aa).

Asparagine 7 is a binding site for Mg(2+). An ATP-binding site is contributed by lysine 14. Residue arginine 71 participates in substrate binding. The active-site Proton donor/acceptor is the aspartate 128. ATP contacts are provided by residues 188–192, 262–264, and 310–314; these read HLGNG, DFR, and GVGEN. Glutamate 364 contributes to the Mg(2+) binding site.

The protein belongs to the acetokinase family. As to quaternary structure, homodimer. Mg(2+) serves as cofactor. Mn(2+) is required as a cofactor.

It is found in the cytoplasm. The enzyme catalyses acetate + ATP = acetyl phosphate + ADP. The protein operates within metabolic intermediate biosynthesis; acetyl-CoA biosynthesis; acetyl-CoA from acetate: step 1/2. Its function is as follows. Catalyzes the formation of acetyl phosphate from acetate and ATP. Can also catalyze the reverse reaction. The chain is Acetate kinase from Mycolicibacterium smegmatis (strain ATCC 700084 / mc(2)155) (Mycobacterium smegmatis).